The primary structure comprises 685 residues: DNA-directed RNA polymerase subunit beta' (685 aa).

Zn(2+) contacts are provided by Cys-69, Cys-71, Cys-87, and Cys-90. Asp-489, Asp-491, and Asp-493 together coordinate Mg(2+).

It belongs to the RNA polymerase beta' chain family. RpoC1 subfamily. In plastids the minimal PEP RNA polymerase catalytic core is composed of four subunits: alpha, beta, beta', and beta''. When a (nuclear-encoded) sigma factor is associated with the core the holoenzyme is formed, which can initiate transcription. It depends on Mg(2+) as a cofactor. The cofactor is Zn(2+).

It localises to the plastid. Its subcellular location is the chloroplast. The enzyme catalyses RNA(n) + a ribonucleoside 5'-triphosphate = RNA(n+1) + diphosphate. DNA-dependent RNA polymerase catalyzes the transcription of DNA into RNA using the four ribonucleoside triphosphates as substrates. This chain is DNA-directed RNA polymerase subunit beta', found in Buxus microphylla (Littleleaf boxwood).